The chain runs to 113 residues: Probable 4-amino-4-deoxy-L-arabinose-phosphoundecaprenol flippase subunit ArnE (113 aa).

The next 3 helical transmembrane spans lie at 39–59 (IFWL…WLRL), 62–82 (ILPL…VTLI), and 91–111 (VNVK…LMSM). Residues 42–111 (LITAIAMLGF…IMLGIVLMSM (70 aa)) form the EamA domain.

This sequence belongs to the ArnE family. In terms of assembly, heterodimer of ArnE and ArnF.

The protein resides in the cell inner membrane. Its pathway is bacterial outer membrane biogenesis; lipopolysaccharide biosynthesis. In terms of biological role, translocates 4-amino-4-deoxy-L-arabinose-phosphoundecaprenol (alpha-L-Ara4N-phosphoundecaprenol) from the cytoplasmic to the periplasmic side of the inner membrane. This is Probable 4-amino-4-deoxy-L-arabinose-phosphoundecaprenol flippase subunit ArnE from Proteus mirabilis (strain HI4320).